A 541-amino-acid chain; its full sequence is Neutral amino acid transporter B(0) (541 aa).

Met1 is subject to N-acetylmethionine. The span at 1-10 (MVADPPKGDP) shows a compositional bias: basic and acidic residues. The tract at residues 1 to 32 (MVADPPKGDPKGLAAVEPTANGAPAQDPLEDS) is disordered. Residues 1 to 52 (MVADPPKGDPKGLAAVEPTANGAPAQDPLEDSGAAVGRCCSSRDQVRRCLRA) are Cytoplasmic-facing. Residues 53 to 82 (NLLVLLTVVAVVAGVALGLAVSGAGGALAL) traverse the membrane as a helical segment. At 83-95 (GPARLIAFAFPGE) the chain is on the extracellular side. A helical transmembrane segment spans residues 96 to 117 (LLLRLLKMIILPLVVCSLVGGA). The Cytoplasmic portion of the chain corresponds to 118-131 (ASLDPSALGRLGAW). The helical transmembrane segment at 132–154 (ALLFFLVTTLLASALGVGLALAL) threads the bilayer. Residues 155 to 225 (QPGAAFAAMN…GTLVKVPVAH (71 aa)) lie on the Extracellular side of the membrane. Asn164 and Asn215 each carry an N-linked (GlcNAc...) asparagine glycan. The helical transmembrane segment at 226–249 (EEEGMNILGLVVFAIVFGVALRKL) threads the bilayer. The Cytoplasmic portion of the chain corresponds to 250–258 (GPEGEPLIR). The helical transmembrane segment at 259–286 (FFNSFNDATMVLVSWIMWYAPVGILFLV) threads the bilayer. Residues 287-307 (ASKIVEMDDVGVLFASLGKYI) are Extracellular-facing. A helical transmembrane segment spans residues 308 to 329 (LCCLLGHAIHGLLVLPLIYFLF). Residues 330 to 334 (TRKNP) are Cytoplasmic-facing. Residues 335–365 (YRFLWGILTPLAMAFGTSSSSATLPLMMKCV) constitute an intramembrane region (discontinuously helical). The Cytoplasmic portion of the chain corresponds to 366 to 374 (EERNGVAKH). A helical membrane pass occupies residues 375 to 401 (ISRFVLPIGATVNMDGAALFQCVAAVF). The Na(+) site is built by Gly383, Thr385, and Asn387. The Extracellular portion of the chain corresponds to 402-414 (IAQLNRQSLDFVK). The discontinuously helical intramembrane region spans 415–448 (IITILVTATASSVGAAGIPAGGVLTLAIILEAVS). Topologically, residues 449 to 461 (LPVSEISLILAVD) are extracellular. A helical membrane pass occupies residues 462–483 (WLVDRSCTIINVEGDAFGAGLL). Asn472 and Asp476 together coordinate Na(+). Topologically, residues 484 to 541 (QHYVDRTEQRGSEPELTQVKSEVPLGSLPAPNEEGNPLLRHSPGAAGDAGACEKESVM) are cytoplasmic. The tract at residues 493–541 (RGSEPELTQVKSEVPLGSLPAPNEEGNPLLRHSPGAAGDAGACEKESVM) is disordered. A phosphoserine mark is found at Ser495, Ser504, and Ser539.

It belongs to the dicarboxylate/amino acid:cation symporter (DAACS) (TC 2.A.23) family. SLC1A5 subfamily. In terms of assembly, homotrimer.

The protein resides in the cell membrane. It localises to the melanosome. The catalysed reaction is L-glutamine(out) + L-serine(in) + Na(+)(out) = L-glutamine(in) + L-serine(out) + Na(+)(in). It catalyses the reaction L-glutamine(in) + L-serine(out) + Na(+)(out) = L-glutamine(out) + L-serine(in) + Na(+)(in). It carries out the reaction L-threonine(in) + L-glutamine(out) + Na(+)(out) = L-threonine(out) + L-glutamine(in) + Na(+)(in). The enzyme catalyses L-threonine(out) + L-glutamine(in) + Na(+)(out) = L-threonine(in) + L-glutamine(out) + Na(+)(in). The catalysed reaction is L-asparagine(in) + L-glutamine(out) + Na(+)(out) = L-asparagine(out) + L-glutamine(in) + Na(+)(in). It catalyses the reaction L-asparagine(out) + L-glutamine(in) + Na(+)(out) = L-asparagine(in) + L-glutamine(out) + Na(+)(in). It carries out the reaction L-glutamine(in) + L-alanine(out) + Na(+)(out) = L-glutamine(out) + L-alanine(in) + Na(+)(in). The enzyme catalyses L-valine(out) + L-glutamine(in) + Na(+)(out) = L-valine(in) + L-glutamine(out) + Na(+)(in). The catalysed reaction is L-glutamine(in) + L-methionine(out) + Na(+)(out) = L-glutamine(out) + L-methionine(in) + Na(+)(in). It catalyses the reaction L-glutamine(in) + L-glutamate(out) + Na(+)(out) + H(+)(out) = L-glutamine(out) + L-glutamate(in) + Na(+)(in) + H(+)(in). It carries out the reaction D-serine(in) + L-glutamine(out) + Na(+)(out) = D-serine(out) + L-glutamine(in) + Na(+)(in). The enzyme catalyses D-serine(in) + L-alanine(out) + Na(+)(out) = D-serine(out) + L-alanine(in) + Na(+)(in). The catalysed reaction is nitrate(in) = nitrate(out). It catalyses the reaction iodide(out) = iodide(in). It carries out the reaction thiocyanate(in) = thiocyanate(out). Its function is as follows. Sodium-coupled antiporter of neutral amino acids. In a tri-substrate transport cycle, exchanges neutral amino acids between the extracellular and intracellular compartments, coupled to the inward cotransport of at least one sodium ion. The preferred substrate is the essential amino acid L-glutamine, a precursor for biosynthesis of proteins, nucleotides and amine sugars as well as an alternative fuel for mitochondrial oxidative phosphorylation. Exchanges L-glutamine with other neutral amino acids such as L-serine, L-threonine and L-asparagine in a bidirectional way. Provides L-glutamine to proliferating stem and activated cells driving the metabolic switch toward cell differentiation. The transport cycle is usually pH-independent, with the exception of L-glutamate. Transports extracellular L-glutamate coupled to the cotransport of one proton and one sodium ion in exchange for intracellular L-glutamine counter-ion. May provide for L-glutamate uptake in glial cells regulating glutamine/glutamate cycle in the nervous system. Can transport D-amino acids. Mediates D-serine release from the retinal glia potentially affecting NMDA receptor function in retinal neurons. Displays sodium- and amino acid-dependent but uncoupled channel-like anion conductance with a preference SCN(-) &gt;&gt; NO3(-) &gt; I(-) &gt; Cl(-). Through binding of the fusogenic protein syncytin-1/ERVW-1 may mediate trophoblasts syncytialization, the spontaneous fusion of their plasma membranes, an essential process in placental development. The sequence is that of Neutral amino acid transporter B(0) (SLC1A5) from Oryctolagus cuniculus (Rabbit).